The sequence spans 477 residues: Glycogen synthase (477 aa).

ADP-alpha-D-glucose is bound at residue Lys15.

Belongs to the glycosyltransferase 1 family. Bacterial/plant glycogen synthase subfamily.

It catalyses the reaction [(1-&gt;4)-alpha-D-glucosyl](n) + ADP-alpha-D-glucose = [(1-&gt;4)-alpha-D-glucosyl](n+1) + ADP + H(+). It functions in the pathway glycan biosynthesis; glycogen biosynthesis. In terms of biological role, synthesizes alpha-1,4-glucan chains using ADP-glucose. The protein is Glycogen synthase of Shigella boydii serotype 18 (strain CDC 3083-94 / BS512).